The following is a 531-amino-acid chain: Putative aldehyde dehydrogenase family 7 member A1 homolog (531 aa).

264–269 (GSSEIG) serves as a coordination point for NAD(+). The active-site Proton acceptor is the Glu-286. The active-site Nucleophile is the Cys-320.

It belongs to the aldehyde dehydrogenase family. Homotetramer.

The catalysed reaction is an aldehyde + NAD(+) + H2O = a carboxylate + NADH + 2 H(+). In Caenorhabditis elegans, this protein is Putative aldehyde dehydrogenase family 7 member A1 homolog (alh-9).